The following is a 159-amino-acid chain: SsrA-binding protein (159 aa).

A compositionally biased stretch (basic and acidic residues) spans 133 to 147 (KRQDLAKRDAQREMA). Positions 133-159 (KRQDLAKRDAQREMARAAGRRSKGMDD) are disordered. A compositionally biased stretch (basic residues) spans 150–159 (AGRRSKGMDD).

This sequence belongs to the SmpB family.

It localises to the cytoplasm. Required for rescue of stalled ribosomes mediated by trans-translation. Binds to transfer-messenger RNA (tmRNA), required for stable association of tmRNA with ribosomes. tmRNA and SmpB together mimic tRNA shape, replacing the anticodon stem-loop with SmpB. tmRNA is encoded by the ssrA gene; the 2 termini fold to resemble tRNA(Ala) and it encodes a 'tag peptide', a short internal open reading frame. During trans-translation Ala-aminoacylated tmRNA acts like a tRNA, entering the A-site of stalled ribosomes, displacing the stalled mRNA. The ribosome then switches to translate the ORF on the tmRNA; the nascent peptide is terminated with the 'tag peptide' encoded by the tmRNA and targeted for degradation. The ribosome is freed to recommence translation, which seems to be the essential function of trans-translation. This chain is SsrA-binding protein, found in Salinispora arenicola (strain CNS-205).